Reading from the N-terminus, the 392-residue chain is MVSDYIKSYIERSLEQIRDKLPDKVIQDLREALLNTDINLTESDVDKIIDLAVKDYQESLIEPGEAVGIVSAQSIGEPGTQMTLRTFHFAGIRELNVTLGLPRLIEIVDARKTPSTPIMTIYLTDEYKYDKEKALEIARKIEYTKIENVISSISVDITNMSITIQLDEEMLKDKGVDPSSVKKIISKLKLGKIRIEDIDDYTFTIYFEEIDNISALFKMREKLLNTKIKGIKGIRRAIVQKKGDEYVIITDGSNLEGVIGIKGVDVNKIQTNNIHEIADTFGIEAAREAIAREIKKVLEEQGLDVDMRHILLVADIMTRTGVVRQIGRHGVTGEKSSVLARAAFEVTVKHLLDAAARGEMEEFKGVVENIIIGQPIRLGTGIVELTMRLNVR.

Belongs to the RNA polymerase beta' chain family. Part of the RNA polymerase complex.

It localises to the cytoplasm. It catalyses the reaction RNA(n) + a ribonucleoside 5'-triphosphate = RNA(n+1) + diphosphate. In terms of biological role, DNA-dependent RNA polymerase (RNAP) catalyzes the transcription of DNA into RNA using the four ribonucleoside triphosphates as substrates. Forms part of the jaw domain. In Sulfurisphaera tokodaii (strain DSM 16993 / JCM 10545 / NBRC 100140 / 7) (Sulfolobus tokodaii), this protein is DNA-directed RNA polymerase subunit Rpo1C.